The primary structure comprises 443 residues: Ribosomal protein uS12 methylthiotransferase RimO (443 aa).

The MTTase N-terminal domain maps to 8-118 (PKVGFVSLGC…VVNAVHEVVP (111 aa)). The [4Fe-4S] cluster site is built by Cys-17, Cys-53, Cys-82, Cys-151, Cys-155, and Cys-158. A Radical SAM core domain is found at 137 to 375 (LTPRHYAYLK…MAHQQAISTA (239 aa)). Residues 378-443 (QLRIGKEIEV…DEYDMWAEPI (66 aa)) enclose the TRAM domain.

It belongs to the methylthiotransferase family. RimO subfamily. [4Fe-4S] cluster is required as a cofactor.

It localises to the cytoplasm. The catalysed reaction is L-aspartate(89)-[ribosomal protein uS12]-hydrogen + (sulfur carrier)-SH + AH2 + 2 S-adenosyl-L-methionine = 3-methylsulfanyl-L-aspartate(89)-[ribosomal protein uS12]-hydrogen + (sulfur carrier)-H + 5'-deoxyadenosine + L-methionine + A + S-adenosyl-L-homocysteine + 2 H(+). Functionally, catalyzes the methylthiolation of an aspartic acid residue of ribosomal protein uS12. In Pseudomonas putida (strain GB-1), this protein is Ribosomal protein uS12 methylthiotransferase RimO.